The following is a 434-amino-acid chain: MTKRDQNEVLFERAQKTIPGGVNSPVRAFRQVGGTPRFISKAKGPYFWDAENKRYIDLIMSWGPMIAGHANPEVVEAVQKAAETSFSYGAPTEGEIELAERICALVPSIEQVRMVSSGTEATMSALRLARGYTNRDLIIKFEGCYHGHADSLLVKAGSGLLTFADSTQNAPSSGGVPQDLVKHTLVLPYNDVEAIEAVFKKQGNEIAAVILEPIAGNMNLIKPSAEFLKALRDLTSQYGSVLIYDEVMTGFRVALGGAQSLQGIVPDLTCLGKVMGGGMPMAAFGGKKEIMSKLAPLGNVYQAGTLSGNPVAVAAGLKTLEIVSRAGFYECLSAQTEKLMLGLKQGADKSGIPFAVDSVGGMFGFYFADAVPSTYEAVTKTNIDAFKKFFHLMLDEGVYLAPSAYEAGFTSIAHDDAVLQVIIDAAEKSFPQLR.

Position 273 is an N6-(pyridoxal phosphate)lysine (Lys273).

This sequence belongs to the class-III pyridoxal-phosphate-dependent aminotransferase family. HemL subfamily. In terms of assembly, homodimer. Pyridoxal 5'-phosphate is required as a cofactor.

The protein resides in the cytoplasm. The enzyme catalyses (S)-4-amino-5-oxopentanoate = 5-aminolevulinate. It participates in porphyrin-containing compound metabolism; protoporphyrin-IX biosynthesis; 5-aminolevulinate from L-glutamyl-tRNA(Glu): step 2/2. The sequence is that of Glutamate-1-semialdehyde 2,1-aminomutase from Polynucleobacter asymbioticus (strain DSM 18221 / CIP 109841 / QLW-P1DMWA-1) (Polynucleobacter necessarius subsp. asymbioticus).